Here is a 533-residue protein sequence, read N- to C-terminus: Putative phosphate permease HP_1491 (533 aa).

A run of 12 helical transmembrane segments spans residues 23-43, 47-67, 81-101, 129-149, 156-176, 182-202, 221-241, 248-268, 286-306, 338-358, 372-392, and 509-529; these read IALALLFLIGAALLALIFGQA, GLLLIFAAVIGGYMAMNIGAN, AISMGGAILIAAICEMLGAII, VMLASLLSGALWLHVATLIGA, SVVGGIMGAGMAAAGMVAVNW, IVASWVISPLMGALIAMFFLM, VVPYLVALMSLTFSWYLIVKV, LNFEIQLACGCILALLIFILF, INELFNVPLIFAAALLSFAHG, VPLWIMVVGAAGIALGLSLYG, LDKMQAFCIALSAVITVLLAS, and LVTVPVSALLGALLFVALGFI.

This sequence belongs to the inorganic phosphate transporter (PiT) (TC 2.A.20) family.

It localises to the cell membrane. In terms of biological role, potential transporter for phosphate. This Helicobacter pylori (strain ATCC 700392 / 26695) (Campylobacter pylori) protein is Putative phosphate permease HP_1491.